Consider the following 227-residue polypeptide: Germin-like protein subfamily 3 member 2 (227 aa).

A signal peptide spans 1-24; the sequence is MEANTLFLLKALCLLCFNVCFTLA. Cysteine 34 and cysteine 54 are disulfide-bonded. Residues asparagine 56 and asparagine 75 are each glycosylated (N-linked (GlcNAc...) asparagine). Positions 68–213 constitute a Cupin type-1 domain; the sequence is SGLKTAGNFT…AFGLSLKQIG (146 aa). Mn(2+) is bound by residues histidine 115, histidine 117, glutamate 122, and histidine 161.

The protein belongs to the germin family. In terms of assembly, oligomer (believed to be a pentamer but probably hexamer).

It localises to the secreted. The protein resides in the extracellular space. Its subcellular location is the apoplast. May play a role in plant defense. Probably has no oxalate oxidase activity even if the active site is conserved. The polypeptide is Germin-like protein subfamily 3 member 2 (Arabidopsis thaliana (Mouse-ear cress)).